The sequence spans 234 residues: Uridylate kinase (234 aa).

10-11 (GS) is an ATP binding site. Gly-44 contributes to the UMP binding site. Residues Gly-45 and Arg-49 each contribute to the ATP site. Residues Asp-66 and 114 to 120 (ITPAQTT) each bind UMP. ATP-binding residues include Thr-140, Tyr-146, and Asp-149.

Belongs to the UMP kinase family. In terms of assembly, homohexamer.

It localises to the cytoplasm. The catalysed reaction is UMP + ATP = UDP + ADP. It functions in the pathway pyrimidine metabolism; CTP biosynthesis via de novo pathway; UDP from UMP (UMPK route): step 1/1. Its activity is regulated as follows. Inhibited by UTP. In terms of biological role, catalyzes the reversible phosphorylation of UMP to UDP. The protein is Uridylate kinase of Methanoculleus marisnigri (strain ATCC 35101 / DSM 1498 / JR1).